A 405-amino-acid chain; its full sequence is Tryptophan synthase beta chain (405 aa).

Lysine 95 bears the N6-(pyridoxal phosphate)lysine mark.

The protein belongs to the TrpB family. Tetramer of two alpha and two beta chains. Pyridoxal 5'-phosphate is required as a cofactor.

The catalysed reaction is (1S,2R)-1-C-(indol-3-yl)glycerol 3-phosphate + L-serine = D-glyceraldehyde 3-phosphate + L-tryptophan + H2O. It participates in amino-acid biosynthesis; L-tryptophan biosynthesis; L-tryptophan from chorismate: step 5/5. Its function is as follows. The beta subunit is responsible for the synthesis of L-tryptophan from indole and L-serine. The chain is Tryptophan synthase beta chain from Pseudomonas entomophila (strain L48).